We begin with the raw amino-acid sequence, 183 residues long: uncharacterized protein (183 aa).

An N-terminal signal peptide occupies residues 1 to 17 (MVLFILVLYTCIQDGNG).

This is an uncharacterized protein from Saccharomyces cerevisiae (strain ATCC 204508 / S288c) (Baker's yeast).